The primary structure comprises 417 residues: Cytoplasmic tRNA 2-thiolation protein 2 (417 aa).

Positions 1–11 (MCSIVEDDFGD) are enriched in acidic residues. A disordered region spans residues 1-24 (MCSIVEDDFGDEGGAHAMKEDTPQ). A compositionally biased stretch (basic and acidic residues) spans 13–22 (GGAHAMKEDT).

Belongs to the CTU2/NCS2 family.

The protein localises to the cytoplasm. It functions in the pathway tRNA modification; 5-methoxycarbonylmethyl-2-thiouridine-tRNA biosynthesis. Plays a central role in 2-thiolation of mcm(5)S(2)U at tRNA wobble positions of tRNA(Lys), tRNA(Glu) and tRNA(Gln). May act by forming a heterodimer with NCS6/CTU1 that ligates sulfur from thiocarboxylated URM1 onto the uridine of tRNAs at wobble position. This Anopheles gambiae (African malaria mosquito) protein is Cytoplasmic tRNA 2-thiolation protein 2.